Reading from the N-terminus, the 170-residue chain is Adenine phosphoribosyltransferase (170 aa).

It belongs to the purine/pyrimidine phosphoribosyltransferase family. As to quaternary structure, homodimer.

It is found in the cytoplasm. The catalysed reaction is AMP + diphosphate = 5-phospho-alpha-D-ribose 1-diphosphate + adenine. Its pathway is purine metabolism; AMP biosynthesis via salvage pathway; AMP from adenine: step 1/1. In terms of biological role, catalyzes a salvage reaction resulting in the formation of AMP, that is energically less costly than de novo synthesis. The chain is Adenine phosphoribosyltransferase from Clostridioides difficile (strain 630) (Peptoclostridium difficile).